Reading from the N-terminus, the 469-residue chain is MAGKTLYDKLWNSHVVRTNPGGTALLYIDRHLVHEVTSPQAFEGLRLAGRKPWRKGANLAVPDHNVPTTDRSQGIQDPISRIQVEALDRNCQELGLTEFRMDDPRQGIVHIVGPEQGATLPGMTVVCGDSHTATHGAFGALAFGIGTSEVEHVLATQCLLQKKSKNMLIQVSGKLAPGVYSKDLILAIIARIGTAGGTGYTIEFAGETIRALSMEGRMTLCNMAIEAGARAGLVAVDETTIDYLKGRPFAPSPHSWGQAVNAWQMLQSDPDASFDRVVTIDAAALKPQVSWGTSPEMVASIDGRVPDPRQESDPTKRGGMERALEYMGLAANTPISEIRPDIIFIGSCTNARIEDLREAAKVVAGHKVAGNIKQALVVPGSGLVKRQAETEGLDQIFKEAGFEWREPGCSMCLAMNADRLEPEERCASTSNRNFEGRQGQGGRTHLVSPAMAAAAAVAGHFTDVSTLNH.

Residues cysteine 348, cysteine 409, and cysteine 412 each contribute to the [4Fe-4S] cluster site.

It belongs to the aconitase/IPM isomerase family. LeuC type 1 subfamily. Heterodimer of LeuC and LeuD. The cofactor is [4Fe-4S] cluster.

The catalysed reaction is (2R,3S)-3-isopropylmalate = (2S)-2-isopropylmalate. The protein operates within amino-acid biosynthesis; L-leucine biosynthesis; L-leucine from 3-methyl-2-oxobutanoate: step 2/4. In terms of biological role, catalyzes the isomerization between 2-isopropylmalate and 3-isopropylmalate, via the formation of 2-isopropylmaleate. This is 3-isopropylmalate dehydratase large subunit from Nitrosococcus oceani (strain ATCC 19707 / BCRC 17464 / JCM 30415 / NCIMB 11848 / C-107).